The primary structure comprises 323 residues: Methenyltetrahydromethanopterin cyclohydrolase (323 aa).

This sequence belongs to the MCH family.

It is found in the cytoplasm. The catalysed reaction is 5,10-methenyl-5,6,7,8-tetrahydromethanopterin + H2O = N(5)-formyl-5,6,7,8-tetrahydromethanopterin + H(+). It functions in the pathway one-carbon metabolism; methanogenesis from CO(2); 5,10-methenyl-5,6,7,8-tetrahydromethanopterin from CO(2): step 3/3. In terms of biological role, catalyzes the reversible interconversion of 5-formyl-H(4)MPT to methenyl-H(4)MPT(+). This chain is Methenyltetrahydromethanopterin cyclohydrolase, found in Methanococcus maripaludis (strain DSM 14266 / JCM 13030 / NBRC 101832 / S2 / LL).